Consider the following 1104-residue polypeptide: A disintegrin and metalloproteinase with thrombospondin motifs 10 (1104 aa).

An N-terminal signal peptide occupies residues Met-1–Ala-25. The propeptide occupies Phe-26–Arg-233. Residues Asn-90 and Asn-222 are each glycosylated (N-linked (GlcNAc...) asparagine). A Peptidase M12B domain is found at Arg-239–Pro-457. 11 disulfides stabilise this stretch: Cys-315/Cys-376, Cys-351/Cys-358, Cys-370/Cys-452, Cys-409/Cys-436, Cys-479/Cys-501, Cys-490/Cys-508, Cys-496/Cys-531, Cys-521/Cys-536, Cys-559/Cys-596, Cys-563/Cys-601, and Cys-574/Cys-586. A Zn(2+)-binding site is contributed by His-392. Glu-393 is an active-site residue. His-396 and His-402 together coordinate Zn(2+). Residues Gln-460–Val-546 form the Disintegrin domain. One can recognise a TSP type-1 1 domain in the interval Asp-547–Pro-602. The segment at Glu-706–Pro-818 is spacer. N-linked (GlcNAc...) asparagine glycosylation is found at Asn-740 and Asn-795. TSP type-1 domains lie at Pro-825–Pro-885, Trp-888–Met-943, Cys-944–Pro-1003, and Pro-1004–Asp-1058. Intrachain disulfides connect Cys-837/Cys-879, Cys-841/Cys-884, and Cys-852/Cys-866. Asn-892 carries an N-linked (GlcNAc...) asparagine glycan. The region spanning Gly-1066 to Arg-1104 is the PLAC domain.

In terms of assembly, interacts with FBN1; this interaction promotes microfibrils assembly. Zn(2+) serves as cofactor. Post-translationally, glycosylated. Can be O-fucosylated by POFUT2 on a serine or a threonine residue found within the consensus sequence C1-X(2)-(S/T)-C2-G of the TSP type-1 repeat domains where C1 and C2 are the first and second cysteine residue of the repeat, respectively. Fucosylated repeats can then be further glycosylated by the addition of a beta-1,3-glucose residue by the glucosyltransferase, B3GALTL. Fucosylation mediates the efficient secretion of ADAMTS family members. Can also be C-glycosylated with one or two mannose molecules on tryptophan residues within the consensus sequence W-X-X-W of the TPRs, and N-glycosylated. These other glycosylations can also facilitate secretion. As to expression, widely expressed in adult tissues.

Its subcellular location is the secreted. The protein resides in the extracellular space. It is found in the extracellular matrix. In terms of biological role, metalloprotease that participate in microfibrils assembly. Microfibrils are extracellular matrix components occurring independently or along with elastin in the formation of elastic tissues. This Mus musculus (Mouse) protein is A disintegrin and metalloproteinase with thrombospondin motifs 10 (Adamts10).